The following is a 347-amino-acid chain: DNA-directed RNA polymerase subunit alpha (347 aa).

The interval 1-226 (MLISQRPTLS…ELFGLARELN (226 aa)) is alpha N-terminal domain (alpha-NTD). An alpha C-terminal domain (alpha-CTD) region spans residues 241–347 (ADHIASFALP…DQDYAETEQL (107 aa)).

This sequence belongs to the RNA polymerase alpha chain family. In terms of assembly, homodimer. The RNAP catalytic core consists of 2 alpha, 1 beta, 1 beta' and 1 omega subunit. When a sigma factor is associated with the core the holoenzyme is formed, which can initiate transcription.

The enzyme catalyses RNA(n) + a ribonucleoside 5'-triphosphate = RNA(n+1) + diphosphate. DNA-dependent RNA polymerase catalyzes the transcription of DNA into RNA using the four ribonucleoside triphosphates as substrates. This is DNA-directed RNA polymerase subunit alpha from Mycobacterium avium (strain 104).